A 149-amino-acid chain; its full sequence is Ribonuclease H (149 aa).

Positions 1 to 142 (MSTITIHTDG…ADELAREGLA (142 aa)) constitute an RNase H type-1 domain. 4 residues coordinate Mg(2+): Asp-9, Glu-47, Asp-70, and Asp-134. A disordered region spans residues 124–149 (HAGDPGNERADELAREGLAEARGRQP). A compositionally biased stretch (basic and acidic residues) spans 129–149 (GNERADELAREGLAEARGRQP).

Belongs to the RNase H family. As to quaternary structure, monomer. The cofactor is Mg(2+).

It localises to the cytoplasm. It carries out the reaction Endonucleolytic cleavage to 5'-phosphomonoester.. In terms of biological role, endonuclease that specifically degrades the RNA of RNA-DNA hybrids. This is Ribonuclease H from Maricaulis maris (strain MCS10) (Caulobacter maris).